The sequence spans 198 residues: uncharacterized protein (198 aa).

Positions 166–198 are disordered; that stretch reads GYEPDEKARKKRERVKRSEVEDQLKINVKPTRR.

This is an uncharacterized protein from Coxiella burnetii (strain RSA 493 / Nine Mile phase I).